Here is a 493-residue protein sequence, read N- to C-terminus: High affinity nitrate transporter 2.7 (493 aa).

Polar residues predominate over residues 1-19 (MEPSQRNTKPPSFSDSTIP). A disordered region spans residues 1–20 (MEPSQRNTKPPSFSDSTIPV). 12 consecutive transmembrane segments (helical) span residues 46–66 (WLSLFSCFFSTFSIPPLVPVI), 70–90 (LNLSASTVSAAGIASFAGSIF), 113–133 (FLTAPVILSASLVSSPTSFIL), 136–156 (FFVGFSLANFVANQYWMSSMF), 174–194 (VGAGISQLLMPLIYSTIAEFL), 202–222 (VSFVFPAIFQVTTAVLVLLYG), 257–277 (FVEILIGGLGNYRAWILALLY), 299–319 (FGVNLEAAGTIAASFGISNIA), 341–361 (LWGLWIVQSVAGLLCVLLGRV), 368–388 (ILVMWVFSVFVQAASGLVFGV), 400–420 (VAGITGSGGTVGAVVTQFLLF), and 431–451 (ISLMGLMTFVFALSVTSIYFP).

Belongs to the major facilitator superfamily. Nitrate/nitrite porter (TC 2.A.1.8) family. In terms of tissue distribution, expressed in seeds, leaves and shoots. Lower expression in roots.

The protein localises to the vacuole membrane. Involved in high-affinity nitrate transport. Controls nitrate content in seeds. The polypeptide is High affinity nitrate transporter 2.7 (NRT2.7) (Arabidopsis thaliana (Mouse-ear cress)).